The primary structure comprises 85 residues: Small ribosomal subunit protein uS17 (85 aa).

It belongs to the universal ribosomal protein uS17 family. In terms of assembly, part of the 30S ribosomal subunit.

In terms of biological role, one of the primary rRNA binding proteins, it binds specifically to the 5'-end of 16S ribosomal RNA. This is Small ribosomal subunit protein uS17 from Desulfosudis oleivorans (strain DSM 6200 / JCM 39069 / Hxd3) (Desulfococcus oleovorans).